A 300-amino-acid polypeptide reads, in one-letter code: Ribosomal protein L11 methyltransferase (300 aa).

The S-adenosyl-L-methionine site is built by Thr152, Gly173, Asp195, and Asn234.

This sequence belongs to the methyltransferase superfamily. PrmA family.

Its subcellular location is the cytoplasm. It carries out the reaction L-lysyl-[protein] + 3 S-adenosyl-L-methionine = N(6),N(6),N(6)-trimethyl-L-lysyl-[protein] + 3 S-adenosyl-L-homocysteine + 3 H(+). Methylates ribosomal protein L11. This chain is Ribosomal protein L11 methyltransferase, found in Burkholderia thailandensis (strain ATCC 700388 / DSM 13276 / CCUG 48851 / CIP 106301 / E264).